The chain runs to 504 residues: Glucose-6-phosphate isomerase (504 aa).

The active-site Proton donor is glutamate 333. Active-site residues include histidine 364 and lysine 473.

Belongs to the GPI family.

The protein localises to the cytoplasm. It carries out the reaction alpha-D-glucose 6-phosphate = beta-D-fructose 6-phosphate. Its pathway is carbohydrate biosynthesis; gluconeogenesis. The protein operates within carbohydrate degradation; glycolysis; D-glyceraldehyde 3-phosphate and glycerone phosphate from D-glucose: step 2/4. Its function is as follows. Catalyzes the reversible isomerization of glucose-6-phosphate to fructose-6-phosphate. This chain is Glucose-6-phosphate isomerase, found in Xanthomonas euvesicatoria pv. vesicatoria (strain 85-10) (Xanthomonas campestris pv. vesicatoria).